The sequence spans 104 residues: Pyrimidine/purine nucleoside phosphorylase (104 aa).

Belongs to the nucleoside phosphorylase PpnP family.

The catalysed reaction is a purine D-ribonucleoside + phosphate = a purine nucleobase + alpha-D-ribose 1-phosphate. It catalyses the reaction adenosine + phosphate = alpha-D-ribose 1-phosphate + adenine. The enzyme catalyses cytidine + phosphate = cytosine + alpha-D-ribose 1-phosphate. It carries out the reaction guanosine + phosphate = alpha-D-ribose 1-phosphate + guanine. The catalysed reaction is inosine + phosphate = alpha-D-ribose 1-phosphate + hypoxanthine. It catalyses the reaction thymidine + phosphate = 2-deoxy-alpha-D-ribose 1-phosphate + thymine. The enzyme catalyses uridine + phosphate = alpha-D-ribose 1-phosphate + uracil. It carries out the reaction xanthosine + phosphate = alpha-D-ribose 1-phosphate + xanthine. Catalyzes the phosphorolysis of diverse nucleosides, yielding D-ribose 1-phosphate and the respective free bases. Can use uridine, adenosine, guanosine, cytidine, thymidine, inosine and xanthosine as substrates. Also catalyzes the reverse reactions. This Janthinobacterium sp. (strain Marseille) (Minibacterium massiliensis) protein is Pyrimidine/purine nucleoside phosphorylase.